The primary structure comprises 70 residues: Small ribosomal subunit protein bS21 (70 aa).

It belongs to the bacterial ribosomal protein bS21 family.

The sequence is that of Small ribosomal subunit protein bS21 from Helicobacter hepaticus (strain ATCC 51449 / 3B1).